The chain runs to 1051 residues: Exportin-T (1051 aa).

Belongs to the exportin family.

The protein localises to the nucleus. The protein resides in the cytoplasm. Functionally, tRNA nucleus export receptor which facilitates tRNA translocation across the nuclear pore complex. Involved in pre-tRNA splicing, probably by affecting the interaction of pre-tRNA with splicing endonuclease. The protein is Exportin-T (LOS1) of Eremothecium gossypii (strain ATCC 10895 / CBS 109.51 / FGSC 9923 / NRRL Y-1056) (Yeast).